Here is a 289-residue protein sequence, read N- to C-terminus: 4-hydroxybenzoate octaprenyltransferase (289 aa).

Helical transmembrane passes span 22–42 (AGWLLLLWPTLSALWLASHGF), 45–65 (WHLVTVFTLGTFLMRSAGCCI), 96–116 (LGLGAVLALLAFGLVLTTNAV), 118–138 (IAWSFAALAVTLAYPFAKRYV), 140–160 (MPQAVLGVAFSCGILMAFAAV), 164–184 (VPPLAWALLLGNLFWVIAYDT), 211–231 (VAGVMLSYLIFISIWAFALIQ), 236–256 (AIFMIAIALALAQALWHGWLI), and 267–287 (AFRLNHWLGFTVFAGVALSYW).

This sequence belongs to the UbiA prenyltransferase family. The cofactor is Mg(2+).

The protein localises to the cell inner membrane. The catalysed reaction is all-trans-octaprenyl diphosphate + 4-hydroxybenzoate = 4-hydroxy-3-(all-trans-octaprenyl)benzoate + diphosphate. It participates in cofactor biosynthesis; ubiquinone biosynthesis. Catalyzes the prenylation of para-hydroxybenzoate (PHB) with an all-trans polyprenyl group. Mediates the second step in the final reaction sequence of ubiquinone-8 (UQ-8) biosynthesis, which is the condensation of the polyisoprenoid side chain with PHB, generating the first membrane-bound Q intermediate 3-octaprenyl-4-hydroxybenzoate. The sequence is that of 4-hydroxybenzoate octaprenyltransferase from Polaromonas naphthalenivorans (strain CJ2).